The sequence spans 598 residues: Elongation factor 4 (598 aa).

One can recognise a tr-type G domain in the interval 5 to 187 (ANIRNFSIIA…ALVEFIPAPT (183 aa)). Residues 17 to 22 (DHGKST) and 134 to 137 (NKID) contribute to the GTP site.

This sequence belongs to the TRAFAC class translation factor GTPase superfamily. Classic translation factor GTPase family. LepA subfamily.

The protein localises to the cell inner membrane. It carries out the reaction GTP + H2O = GDP + phosphate + H(+). In terms of biological role, required for accurate and efficient protein synthesis under certain stress conditions. May act as a fidelity factor of the translation reaction, by catalyzing a one-codon backward translocation of tRNAs on improperly translocated ribosomes. Back-translocation proceeds from a post-translocation (POST) complex to a pre-translocation (PRE) complex, thus giving elongation factor G a second chance to translocate the tRNAs correctly. Binds to ribosomes in a GTP-dependent manner. This chain is Elongation factor 4, found in Psychrobacter cryohalolentis (strain ATCC BAA-1226 / DSM 17306 / VKM B-2378 / K5).